A 259-amino-acid chain; its full sequence is uncharacterized protein (259 aa).

A signal peptide (or 26) is located at residues 1–19; it reads MKLSVKIAGVLTVAAAAMT. An ATP-binding site is contributed by 214–221; sequence GPYELGKT.

This is an uncharacterized protein from Bacillus subtilis (strain 168).